The sequence spans 111 residues: Large ribosomal subunit protein uL22 (111 aa).

Belongs to the universal ribosomal protein uL22 family. As to quaternary structure, part of the 50S ribosomal subunit.

Functionally, this protein binds specifically to 23S rRNA; its binding is stimulated by other ribosomal proteins, e.g. L4, L17, and L20. It is important during the early stages of 50S assembly. It makes multiple contacts with different domains of the 23S rRNA in the assembled 50S subunit and ribosome. The globular domain of the protein is located near the polypeptide exit tunnel on the outside of the subunit, while an extended beta-hairpin is found that lines the wall of the exit tunnel in the center of the 70S ribosome. The chain is Large ribosomal subunit protein uL22 from Chlamydia caviae (strain ATCC VR-813 / DSM 19441 / 03DC25 / GPIC) (Chlamydophila caviae).